Here is a 234-residue protein sequence, read N- to C-terminus: Inner membrane protein YbhL (234 aa).

Residues 1–23 (MDRFPRSDSIVQPRAGLQTYMAQ) lie on the Periplasmic side of the membrane. The chain crosses the membrane as a helical span at residues 24-44 (VYGWMTVGLLLTAFVAWYAAN). The Cytoplasmic portion of the chain corresponds to 45 to 56 (SAAVMELLFTNR). Residues 57–77 (VFLIGLIIAQLALVIVLSAMI) form a helical membrane-spanning segment. Topologically, residues 78-79 (QK) are periplasmic. Residues 80-100 (LSAGVTTMLFMLYSALTGLTL) form a helical membrane-spanning segment. Topologically, residues 101-102 (SS) are cytoplasmic. The helical transmembrane segment at 103-123 (IFIVYTAASIASTFVVTAGMF) threads the bilayer. Residues 124–136 (GAMSLYGYTTKRD) are Periplasmic-facing. The helical transmembrane segment at 137–157 (LSGFGNMLFMALIGIVLASLV) threads the bilayer. Over 158 to 163 (NFWLKS) the chain is Cytoplasmic. A helical membrane pass occupies residues 164-184 (EALMWAVTYIGVIVFVGLTAY). Topologically, residues 185 to 206 (DTQKLKNMGEQIDTRDTSNLRK) are periplasmic. The helical transmembrane segment at 207 to 227 (YSILGALTLYLDFINLFLMLL) threads the bilayer. Residues 228–234 (RIFGNRR) are Cytoplasmic-facing.

Belongs to the BI1 family.

It localises to the cell inner membrane. The polypeptide is Inner membrane protein YbhL (ybhL) (Escherichia coli (strain K12)).